Consider the following 157-residue polypeptide: 2-C-methyl-D-erythritol 2,4-cyclodiphosphate synthase (157 aa).

A divalent metal cation is bound by residues Asp8 and His10. 4-CDP-2-C-methyl-D-erythritol 2-phosphate contacts are provided by residues 8–10 (DVH) and 34–35 (HS). His42 is an a divalent metal cation binding site. 4-CDP-2-C-methyl-D-erythritol 2-phosphate is bound by residues 56–58 (DIG), 61–65 (FPDTD), 132–135 (TTTE), Phe139, and Arg142.

Belongs to the IspF family. As to quaternary structure, homotrimer. It depends on a divalent metal cation as a cofactor.

It catalyses the reaction 4-CDP-2-C-methyl-D-erythritol 2-phosphate = 2-C-methyl-D-erythritol 2,4-cyclic diphosphate + CMP. It participates in isoprenoid biosynthesis; isopentenyl diphosphate biosynthesis via DXP pathway; isopentenyl diphosphate from 1-deoxy-D-xylulose 5-phosphate: step 4/6. Functionally, involved in the biosynthesis of isopentenyl diphosphate (IPP) and dimethylallyl diphosphate (DMAPP), two major building blocks of isoprenoid compounds. Catalyzes the conversion of 4-diphosphocytidyl-2-C-methyl-D-erythritol 2-phosphate (CDP-ME2P) to 2-C-methyl-D-erythritol 2,4-cyclodiphosphate (ME-CPP) with a corresponding release of cytidine 5-monophosphate (CMP). This Geobacter metallireducens (strain ATCC 53774 / DSM 7210 / GS-15) protein is 2-C-methyl-D-erythritol 2,4-cyclodiphosphate synthase.